The sequence spans 597 residues: MMDLELPPPGLQSQQDMDLIDILWRQDIDLGVSREVFDFSQRQKDYELEKQKKLEKERQEQLQKEQEKAFFAQFQLDEETGEFLPIQPAQHIQTDTSGSASYSQVAHIPKQDALYFEDCMQLLAETFPFVDDHESLALDIPSHAESSVFTAPHQAQSLNSSLEAAMTDLSSIEQDMEQVWQELFSIPELQCLNTENKQLADTTAVPSPEATLTEMDSNYHFYSSISSLEKEVGNCGPHFLHGFEDSFSSILSTDDASQLTSLDSNPTLNTDFGDEFYSAFIAEPSDGGSMPSSAAISQSLSELLDGTIEGCDLSLCKAFNPKHAEGTMEFNDSDSGISLNTSPSRASPEHSVESSIYGDPPPGFSDSEMEELDSAPGSVKQNGPKAQPAHSPGDTVQPLSPAQGHSAPMRESQCENTTKKEVPVSPGHQKAPFTKDKHSSRLEAHLTRDELRAKALHIPFPVEKIINLPVDDFNEMMSKEQFNEAQLALIRDIRRRGKNKVAAQNCRKRKLENIVELEQDLGHLKDEREKLLREKGENDRNLHLLKRRLSTLYLEVFSMLRDEDGKPYSPSEYSLQQTRDGNVFLVPKSKKPDTKKN.

The DLG motif signature appears at 29–31 (DLG). Ser-40 is modified (phosphoserine; by PKC). The ETGE motif signature appears at 79–82 (ETGE). Position 207 is a phosphoserine (Ser-207). The disordered stretch occupies residues 327 to 440 (TMEFNDSDSG…APFTKDKHSS (114 aa)). The segment covering 333–345 (SDSGISLNTSPSR) has biased composition (polar residues). N-linked (Glc) (glycation) lysine glycans are attached at residues Lys-454, Lys-464, and Lys-479. The bZIP domain maps to 489–552 (LIRDIRRRGK…HLLKRRLSTL (64 aa)). Arg-491 is a glycosylation site (N-linked (Glc) (glycation) arginine). Positions 491–510 (RDIRRRGKNKVAAQNCRKRK) are basic motif. The interval 514–521 (IVELEQDL) is leucine-zipper. An N-linked (Glc) (glycation) arginine glycan is attached at Arg-561. Residues 563–597 (EDGKPYSPSEYSLQQTRDGNVFLVPKSKKPDTKKN) form a disordered region. Lys-566 carries N-linked (Glc) (glycation) lysine glycosylation. Residues 571–580 (SEYSLQQTRD) are compositionally biased toward polar residues. The segment at 583–588 (VFLVPK) is mediates interaction with CHD6 and is necessary to activate transcription. N6-acetyllysine; by CREBBP is present on residues Lys-588 and Lys-591.

This sequence belongs to the bZIP family. CNC subfamily. In terms of assembly, heterodimer; heterodimerizes with small Maf proteins. Interacts (via the bZIP domain) with MAFG and MAFK; required for binding to antioxidant response elements (AREs) on DNA. Interacts with KEAP1; the interaction is direct and promotes ubiquitination by the BCR(KEAP1) E3 ubiquitin ligase complex. Forms a ternary complex with PGAM5 and KEAP1. Interacts with EEF1D at heat shock promoter elements (HSE). Interacts via its leucine-zipper domain with the coiled-coil domain of PMF1. Interacts with CHD6; involved in activation of the transcription. Interacts with ESRRB; represses NFE2L2 transcriptional activity. Interacts with MOTS-c, a peptide produced by the mitochondrially encoded 12S rRNA MT-RNR1; the interaction occurs in the nucleus following metabolic stress. Ubiquitinated in the cytoplasm by the BCR(KEAP1) E3 ubiquitin ligase complex leading to its degradation. In response to oxidative stress, electrophile metabolites, such as sulforaphane, modify KEAP1, leading to inhibit activity of the BCR(KEAP1) complex, promoting NFE2L2/NRF2 nuclear accumulation and activity. In response to autophagy, the BCR(KEAP1) complex is inactivated. In terms of processing, phosphorylated by EIF2AK3/PERK following unfolded protein response (UPR), promoting dissociation from its cytoplasmic inhibitor KEAP1, followed by its translocation into the nucleus. Phosphorylation of Ser-40 by PKC in response to oxidative stress dissociates NFE2L2 from its cytoplasmic inhibitor KEAP1, promoting its translocation into the nucleus. Post-translationally, acetylation at Lys-588 and Lys-591 increases nuclear localization whereas deacetylation by SIRT1 enhances cytoplasmic presence. Glycation impairs transcription factor activity by preventing heterodimerization with small Maf proteins. Deglycation by FN3K restores activity. Widely expressed. Highest expression in liver, skeletal muscle, luminal cells of the stomach and intestine, lining of the bronchi and alveoli, and in renal tubules; followed by heart, spleen, testis and brain.

The protein localises to the cytoplasm. The protein resides in the cytosol. It localises to the nucleus. Its function is as follows. Transcription factor that plays a key role in the response to oxidative stress: binds to antioxidant response (ARE) elements present in the promoter region of many cytoprotective genes, such as phase 2 detoxifying enzymes, and promotes their expression, thereby neutralizing reactive electrophiles. In normal conditions, ubiquitinated and degraded in the cytoplasm by the BCR(KEAP1) complex. In response to oxidative stress, electrophile metabolites inhibit activity of the BCR(KEAP1) complex, promoting nuclear accumulation of NFE2L2/NRF2, heterodimerization with one of the small Maf proteins and binding to ARE elements of cytoprotective target genes. The NFE2L2/NRF2 pathway is also activated in response to selective autophagy: autophagy promotes interaction between KEAP1 and SQSTM1/p62 and subsequent inactivation of the BCR(KEAP1) complex, leading to NFE2L2/NRF2 nuclear accumulation and expression of cytoprotective genes. The NFE2L2/NRF2 pathway is also activated during the unfolded protein response (UPR), contributing to redox homeostasis and cell survival following endoplasmic reticulum stress. May also be involved in the transcriptional activation of genes of the beta-globin cluster by mediating enhancer activity of hypersensitive site 2 of the beta-globin locus control region. Also plays an important role in the regulation of the innate immune response. It is a critical regulator of the innate immune response and survival during sepsis by maintaining redox homeostasis and restraint of the dysregulation of pro-inflammatory signaling pathways like MyD88-dependent and -independent and TNF-alpha signaling. Suppresses macrophage inflammatory response by blocking pro-inflammatory cytokine transcription and the induction of IL6. Binds to the proximity of pro-inflammatory genes in macrophages and inhibits RNA Pol II recruitment. The inhibition is independent of the Nrf2-binding motif and reactive oxygen species level. Represses antiviral cytosolic DNA sensing by suppressing the expression of the adapter protein STING1 and decreasing responsiveness to STING1 agonists while increasing susceptibility to infection with DNA viruses. The polypeptide is Nuclear factor erythroid 2-related factor 2 (Mus musculus (Mouse)).